Consider the following 105-residue polypeptide: Putative zinc finger protein 861 (105 aa).

The segment at 75–97 adopts a C2H2-type zinc-finger fold; sequence YTCKPCGNAFRFHHSFHIHERPH.

This Homo sapiens (Human) protein is Putative zinc finger protein 861 (ZNF861P).